The chain runs to 390 residues: GTPase Obg (390 aa).

One can recognise an Obg domain in the interval 1 to 159 (MKFVDEAVVK…REIRLELLLL (159 aa)). The region spanning 160–333 (ADVGMLGLPN…LCYKLADFME (174 aa)) is the OBG-type G domain. Residues 166–173 (GLPNAGKS), 191–195 (FTTLI), 213–216 (DIPG), 283–286 (NKVD), and 314–316 (SAI) contribute to the GTP site. Mg(2+) contacts are provided by Ser-173 and Thr-193. The segment covering 367–382 (TEDDDDWDDWDDEEDD) has biased composition (acidic residues). Positions 367-390 (TEDDDDWDDWDDEEDDGHVVYVRD) are disordered.

This sequence belongs to the TRAFAC class OBG-HflX-like GTPase superfamily. OBG GTPase family. Monomer. Requires Mg(2+) as cofactor.

It is found in the cytoplasm. Its function is as follows. An essential GTPase which binds GTP, GDP and possibly (p)ppGpp with moderate affinity, with high nucleotide exchange rates and a fairly low GTP hydrolysis rate. Plays a role in control of the cell cycle, stress response, ribosome biogenesis and in those bacteria that undergo differentiation, in morphogenesis control. The protein is GTPase Obg of Vibrio parahaemolyticus serotype O3:K6 (strain RIMD 2210633).